Consider the following 537-residue polypeptide: Oocyte zinc finger protein XlCOF29 (537 aa).

The tract at residues 1-21 (MGMSEKASDTGMKGKKKDKNE) is disordered. C2H2-type zinc fingers lie at residues 375 to 397 (FTCSECGKTYTRLYNLKIHLKSH), 403 to 425 (FSCSECEECFTDHTDLVIHRRLH), 431 to 453 (FPCAECGKCFTNCTNLRAHSKTH), 459 to 481 (YSCTECGKTFRDRSHLNIHKKRH), 487 to 509 (YTCSECGKCFAYRSNLMVHVRIH), and 515 to 537 (FSCSKCGKCFTDHANLIVHERMH).

This sequence belongs to the krueppel C2H2-type zinc-finger protein family.

It localises to the nucleus. Its function is as follows. May be involved in transcriptional regulation. This Xenopus laevis (African clawed frog) protein is Oocyte zinc finger protein XlCOF29.